Consider the following 273-residue polypeptide: DNA repair protein RecO (273 aa).

The segment at 250 to 273 is disordered; it reads NVGQNPSGKDDLNERRDVDGTGES. Positions 257 to 273 are enriched in basic and acidic residues; it reads GKDDLNERRDVDGTGES.

It belongs to the RecO family.

Functionally, involved in DNA repair and RecF pathway recombination. The polypeptide is DNA repair protein RecO (Desulfitobacterium hafniense (strain DSM 10664 / DCB-2)).